Consider the following 507-residue polypeptide: RNA demethylase ALKBH9B (507 aa).

Disordered stretches follow at residues 76 to 102 and 145 to 183; these read GSER…DNHS and QEDE…LSRD. The span at 89-100 shows a compositional bias: basic and acidic residues; sequence DEKSENGEDCDN. The span at 145-160 shows a compositional bias: acidic residues; sequence QEDEFDEEEEEEEEER. Residues 174 to 183 are compositionally biased toward basic and acidic residues; sequence TPEKPKLSRD. The 98-residue stretch at 317 to 414 folds into the Fe2OG dioxygenase domain; that stretch reads VPDSCIVNIY…RISITFRKMD (98 aa). 3 residues coordinate Fe cation: His335, Asp337, and His396. Position 405 (Arg405) interacts with 2-oxoglutarate. The disordered stretch occupies residues 432-507; that stretch reads EPLPLDLNRS…MPRPSRRNYG (76 aa). Polar residues predominate over residues 440–450; sequence RSGSTSRFSRL. The segment covering 497–507 has biased composition (basic residues); that stretch reads GMPRPSRRNYG.

This sequence belongs to the alkB family. In terms of assembly, (Microbial infection) Interacts with the capsid protein ORF3b of the alfalfa mosaic virus (AMV). It depends on Fe(2+) as a cofactor.

The protein resides in the cytoplasm. Its subcellular location is the P-body. It localises to the cytoplasmic granule. It carries out the reaction an N(6)-methyladenosine in mRNA + 2-oxoglutarate + O2 = an adenosine in mRNA + formaldehyde + succinate + CO2. Dioxygenase that demethylates RNA by oxidative demethylation: specifically demethylates N(6)-methyladenosine (m6A) RNA, the most prevalent internal modification of messenger RNA (mRNA) in higher eukaryotes. Modulates viral infection of the alfalfa mosaic virus (AMV) and the m6A abundance in its genomic RNAs. The polypeptide is RNA demethylase ALKBH9B (Arabidopsis thaliana (Mouse-ear cress)).